The following is a 212-amino-acid chain: Small ribosomal subunit protein eS1 (212 aa).

The protein belongs to the eukaryotic ribosomal protein eS1 family.

This Haloquadratum walsbyi (strain DSM 16790 / HBSQ001) protein is Small ribosomal subunit protein eS1.